The following is a 215-amino-acid chain: Negative modulator of initiation of replication (215 aa).

Residues 71–93 (AETPKPSSEQEIRTPARKQSTQS) form a disordered region. An interaction with DNA region spans residues 181 to 187 (NTNSGRK).

This sequence belongs to the SeqA family. Homodimer. Polymerizes to form helical filaments.

Its subcellular location is the cytoplasm. Negative regulator of replication initiation, which contributes to regulation of DNA replication and ensures that replication initiation occurs exactly once per chromosome per cell cycle. Binds to pairs of hemimethylated GATC sequences in the oriC region, thus preventing assembly of replication proteins and re-initiation at newly replicated origins. Repression is relieved when the region becomes fully methylated. This is Negative modulator of initiation of replication from Mannheimia succiniciproducens (strain KCTC 0769BP / MBEL55E).